Consider the following 261-residue polypeptide: Probable septum site-determining protein MinC (261 aa).

This sequence belongs to the MinC family. As to quaternary structure, interacts with MinD and FtsZ.

Its function is as follows. Cell division inhibitor that blocks the formation of polar Z ring septums. Rapidly oscillates between the poles of the cell to destabilize FtsZ filaments that have formed before they mature into polar Z rings. Prevents FtsZ polymerization. This is Probable septum site-determining protein MinC from Burkholderia cenocepacia (strain ATCC BAA-245 / DSM 16553 / LMG 16656 / NCTC 13227 / J2315 / CF5610) (Burkholderia cepacia (strain J2315)).